The sequence spans 211 residues: 3-demethoxyubiquinol 3-hydroxylase (211 aa).

The Fe cation site is built by Glu60, Glu90, His93, Glu142, Glu174, and His177.

It belongs to the COQ7 family. Fe cation serves as cofactor.

It localises to the cell membrane. The catalysed reaction is a 5-methoxy-2-methyl-3-(all-trans-polyprenyl)benzene-1,4-diol + AH2 + O2 = a 3-demethylubiquinol + A + H2O. The protein operates within cofactor biosynthesis; ubiquinone biosynthesis. Its function is as follows. Catalyzes the hydroxylation of 2-nonaprenyl-3-methyl-6-methoxy-1,4-benzoquinol during ubiquinone biosynthesis. This is 3-demethoxyubiquinol 3-hydroxylase from Francisella tularensis subsp. novicida (strain U112).